Here is a 64-residue protein sequence, read N- to C-terminus: Protein DsrB (64 aa).

Belongs to the DsrB family.

In Salmonella enteritidis PT4 (strain P125109), this protein is Protein DsrB.